A 290-amino-acid polypeptide reads, in one-letter code: Acetylglutamate kinase (290 aa).

Residues G60–G61, R82, and N185 each bind substrate.

Belongs to the acetylglutamate kinase family. ArgB subfamily.

Its subcellular location is the cytoplasm. The catalysed reaction is N-acetyl-L-glutamate + ATP = N-acetyl-L-glutamyl 5-phosphate + ADP. It participates in amino-acid biosynthesis; L-arginine biosynthesis; N(2)-acetyl-L-ornithine from L-glutamate: step 2/4. Functionally, catalyzes the ATP-dependent phosphorylation of N-acetyl-L-glutamate. This is Acetylglutamate kinase from Archaeoglobus fulgidus (strain ATCC 49558 / DSM 4304 / JCM 9628 / NBRC 100126 / VC-16).